The sequence spans 141 residues: Hemoglobin subunit alpha (141 aa).

The region spanning 1–141 (VLSAADKTAI…VATALGSHYR (141 aa)) is the Globin domain. H59 serves as a coordination point for O2. A heme b-binding site is contributed by H88.

This sequence belongs to the globin family. As to quaternary structure, heterotetramer of two alpha chains and two beta chains. As to expression, red blood cells.

Functionally, involved in oxygen transport from the lung to the various peripheral tissues. The polypeptide is Hemoglobin subunit alpha (HBA) (Squalus acanthias (Spiny dogfish)).